The primary structure comprises 131 residues: MSYTHILVAVAVTPESHQLLAKAVSIARPVQAKVSLITLASDPELYNQFAAPMMEDLRAVMHEETENFLKMLGEKADYPIEQTFIASGELSQHILAVCRKHHVDLVICGNHNHSFFSRASCSAKVSSAPAR.

This sequence belongs to the universal stress protein A family.

The protein resides in the cytoplasm. Its function is as follows. Required for resistance to DNA-damaging agents. The polypeptide is Universal stress protein C (uspC) (Salmonella typhi).